The primary structure comprises 401 residues: 4-hydroxy-3-methylbut-2-enyl diphosphate reductase (401 aa).

Cysteine 66 lines the [4Fe-4S] cluster pocket. Residue histidine 96 coordinates (2E)-4-hydroxy-3-methylbut-2-enyl diphosphate. Dimethylallyl diphosphate is bound at residue histidine 96. Histidine 96 lines the isopentenyl diphosphate pocket. Cysteine 157 serves as a coordination point for [4Fe-4S] cluster. Residue histidine 185 coordinates (2E)-4-hydroxy-3-methylbut-2-enyl diphosphate. Residue histidine 185 participates in dimethylallyl diphosphate binding. Histidine 185 serves as a coordination point for isopentenyl diphosphate. Glutamate 187 serves as the catalytic Proton donor. Threonine 250 provides a ligand contact to (2E)-4-hydroxy-3-methylbut-2-enyl diphosphate. Residue cysteine 288 participates in [4Fe-4S] cluster binding. 4 residues coordinate (2E)-4-hydroxy-3-methylbut-2-enyl diphosphate: serine 317, serine 318, asparagine 319, and serine 379. Positions 317, 318, 319, and 379 each coordinate dimethylallyl diphosphate. Serine 317, serine 318, asparagine 319, and serine 379 together coordinate isopentenyl diphosphate.

Belongs to the IspH family. [4Fe-4S] cluster serves as cofactor.

It carries out the reaction isopentenyl diphosphate + 2 oxidized [2Fe-2S]-[ferredoxin] + H2O = (2E)-4-hydroxy-3-methylbut-2-enyl diphosphate + 2 reduced [2Fe-2S]-[ferredoxin] + 2 H(+). The catalysed reaction is dimethylallyl diphosphate + 2 oxidized [2Fe-2S]-[ferredoxin] + H2O = (2E)-4-hydroxy-3-methylbut-2-enyl diphosphate + 2 reduced [2Fe-2S]-[ferredoxin] + 2 H(+). It functions in the pathway isoprenoid biosynthesis; dimethylallyl diphosphate biosynthesis; dimethylallyl diphosphate from (2E)-4-hydroxy-3-methylbutenyl diphosphate: step 1/1. It participates in isoprenoid biosynthesis; isopentenyl diphosphate biosynthesis via DXP pathway; isopentenyl diphosphate from 1-deoxy-D-xylulose 5-phosphate: step 6/6. Its function is as follows. Catalyzes the conversion of 1-hydroxy-2-methyl-2-(E)-butenyl 4-diphosphate (HMBPP) into a mixture of isopentenyl diphosphate (IPP) and dimethylallyl diphosphate (DMAPP). Acts in the terminal step of the DOXP/MEP pathway for isoprenoid precursor biosynthesis. This is 4-hydroxy-3-methylbut-2-enyl diphosphate reductase from Trichodesmium erythraeum (strain IMS101).